The sequence spans 233 residues: Small ribosomal subunit protein uS5 (233 aa).

Composition is skewed to basic and acidic residues over residues 1 to 12 (MANESEIQKTEN) and 39 to 54 (RGRDGRGRRDDRRNEE). Positions 1–54 (MANESEIQKTENAEVANAANGTNPNNERRGRGGRGRGGRGRDGRGRRDDRRNEE) are disordered. An S5 DRBM domain is found at 59–122 (LIEKLVHINR…AAAKKTMIRV (64 aa)).

This sequence belongs to the universal ribosomal protein uS5 family. As to quaternary structure, part of the 30S ribosomal subunit. Contacts proteins S4 and S8.

Functionally, with S4 and S12 plays an important role in translational accuracy. Its function is as follows. Located at the back of the 30S subunit body where it stabilizes the conformation of the head with respect to the body. The sequence is that of Small ribosomal subunit protein uS5 from Zymomonas mobilis subsp. mobilis (strain ATCC 31821 / ZM4 / CP4).